A 152-amino-acid polypeptide reads, in one-letter code: MNPAHLLVLLAVCVSLLGASAIPPLPLNLVQFSNMIKCTIPGSRPLLDYADYGCYCGAGGSGTPVDESDRCCQTHDNCYSQAKKHPACKSPLDSPYIKIYSYTCSGGSLTCRDDNDECGAFICNCDRTAAICFAGAPYNKENYNIDTKKHCK.

Residues 1–21 (MNPAHLLVLLAVCVSLLGASA) form the signal peptide. A propeptide spanning residues 22 to 27 (IPPLPL) is cleaved from the precursor. Intrachain disulfides connect Cys-38-Cys-104, Cys-54-Cys-151, Cys-56-Cys-72, Cys-71-Cys-132, Cys-78-Cys-125, Cys-88-Cys-118, and Cys-111-Cys-123. The Ca(2+) site is built by Tyr-55, Gly-57, and Gly-59. Residue His-75 is part of the active site. Asp-76 contacts Ca(2+). Residue Asp-126 is part of the active site.

It belongs to the phospholipase A2 family. Group I subfamily. It depends on Ca(2+) as a cofactor.

It localises to the secreted. It catalyses the reaction a 1,2-diacyl-sn-glycero-3-phosphocholine + H2O = a 1-acyl-sn-glycero-3-phosphocholine + a fatty acid + H(+). PA2 catalyzes the calcium-dependent hydrolysis of the 2-acyl groups in 3-sn-phosphoglycerides. The polypeptide is Phospholipase A2 pkP2 (Laticauda semifasciata (Black-banded sea krait)).